The chain runs to 174 residues: 3-hydroxydecanoyl-[acyl-carrier-protein] dehydratase (174 aa).

H73 is a catalytic residue.

The protein belongs to the thioester dehydratase family. FabA subfamily. In terms of assembly, homodimer.

Its subcellular location is the cytoplasm. The enzyme catalyses a (3R)-hydroxyacyl-[ACP] = a (2E)-enoyl-[ACP] + H2O. It catalyses the reaction (3R)-hydroxydecanoyl-[ACP] = (2E)-decenoyl-[ACP] + H2O. It carries out the reaction (2E)-decenoyl-[ACP] = (3Z)-decenoyl-[ACP]. Its pathway is lipid metabolism; fatty acid biosynthesis. Its function is as follows. Necessary for the introduction of cis unsaturation into fatty acids. Catalyzes the dehydration of (3R)-3-hydroxydecanoyl-ACP to E-(2)-decenoyl-ACP and then its isomerization to Z-(3)-decenoyl-ACP. Can catalyze the dehydratase reaction for beta-hydroxyacyl-ACPs with saturated chain lengths up to 16:0, being most active on intermediate chain length. This chain is 3-hydroxydecanoyl-[acyl-carrier-protein] dehydratase, found in Cellvibrio japonicus (strain Ueda107) (Pseudomonas fluorescens subsp. cellulosa).